Here is a 271-residue protein sequence, read N- to C-terminus: S-adenosylmethionine decarboxylase proenzyme (271 aa).

Serine 121 serves as the catalytic Schiff-base intermediate with substrate; via pyruvic acid. A Pyruvic acid (Ser); by autocatalysis modification is found at serine 121. Catalysis depends on histidine 126, which acts as the Proton acceptor; for processing activity. Cysteine 149 acts as the Proton donor; for catalytic activity in catalysis.

This sequence belongs to the prokaryotic AdoMetDC family. Type 2 subfamily. As to quaternary structure, heterooctamer of four alpha and four beta chains arranged as a tetramer of alpha/beta heterodimers. The cofactor is pyruvate. In terms of processing, is synthesized initially as an inactive proenzyme. Formation of the active enzyme involves a self-maturation process in which the active site pyruvoyl group is generated from an internal serine residue via an autocatalytic post-translational modification. Two non-identical subunits are generated from the proenzyme in this reaction, and the pyruvate is formed at the N-terminus of the alpha chain, which is derived from the carboxyl end of the proenzyme. The post-translation cleavage follows an unusual pathway, termed non-hydrolytic serinolysis, in which the side chain hydroxyl group of the serine supplies its oxygen atom to form the C-terminus of the beta chain, while the remainder of the serine residue undergoes an oxidative deamination to produce ammonia and the pyruvoyl group blocking the N-terminus of the alpha chain.

It carries out the reaction S-adenosyl-L-methionine + H(+) = S-adenosyl 3-(methylsulfanyl)propylamine + CO2. It participates in amine and polyamine biosynthesis; S-adenosylmethioninamine biosynthesis; S-adenosylmethioninamine from S-adenosyl-L-methionine: step 1/1. Functionally, catalyzes the decarboxylation of S-adenosylmethionine to S-adenosylmethioninamine (dcAdoMet), the propylamine donor required for the synthesis of the polyamines spermine and spermidine from the diamine putrescine. The sequence is that of S-adenosylmethionine decarboxylase proenzyme from Clostridium perfringens (strain ATCC 13124 / DSM 756 / JCM 1290 / NCIMB 6125 / NCTC 8237 / Type A).